Consider the following 163-residue polypeptide: MPSFDIVSEITLHEVRNAVENANRVLTTRYDFRGVEAIIELNEKNESIKLTTESEFQLEQLIEMLISACVKRGIEHSSLDIPTDAEHHGKLYSKEIKLKQGIETEIAKKITKLIKDAKIKVQTQIQGDQVRVTGKSRDDLQATIQLIKTAELGQPFQFNNFRD.

This sequence belongs to the YajQ family.

Functionally, nucleotide-binding protein. The polypeptide is Nucleotide-binding protein HD_0358 (Haemophilus ducreyi (strain 35000HP / ATCC 700724)).